A 512-amino-acid polypeptide reads, in one-letter code: Eukaryotic translation initiation factor 3 subunit L (512 aa).

One can recognise a PCI domain in the interval aspartate 291–aspartate 477.

This sequence belongs to the eIF-3 subunit L family. Component of the eukaryotic translation initiation factor 3 (eIF-3) complex.

The protein resides in the cytoplasm. Functionally, component of the eukaryotic translation initiation factor 3 (eIF-3) complex, which is involved in protein synthesis of a specialized repertoire of mRNAs and, together with other initiation factors, stimulates binding of mRNA and methionyl-tRNAi to the 40S ribosome. The eIF-3 complex specifically targets and initiates translation of a subset of mRNAs involved in cell proliferation. In Monosiga brevicollis (Choanoflagellate), this protein is Eukaryotic translation initiation factor 3 subunit L.